The primary structure comprises 600 residues: Alpha pinene synthase, chloroplastic (600 aa).

Positions 1–26 are disordered; that stretch reads MSSISMHARPLNISAANNHHPSWDRR. A chloroplast-targeting transit peptide spans 1–31; the sequence is MSSISMHARPLNISAANNHHPSWDRRVSKPR. The Mg(2+) site is built by Asp-354, Asp-358, Asp-498, and Glu-506. Positions 354–358 match the DDXXD motif motif; the sequence is DDVYD.

The protein belongs to the terpene synthase family. Tpsa subfamily. Requires Mg(2+) as cofactor. Mn(2+) is required as a cofactor. In terms of tissue distribution, barely detectable in leaves.

Its subcellular location is the plastid. It is found in the chloroplast. It carries out the reaction (2E)-geranyl diphosphate = alpha-pinene + diphosphate. It functions in the pathway secondary metabolite biosynthesis; terpenoid biosynthesis. Functionally, monoterpene synthase involved in the biosynthesis of volatile compounds widely used in aromatherapy and folk medicine, and present in culinary herbs. Mediates the conversion of (2E)-geranyl diphosphate (GPP) into alpha-pinene and, as minor compounds, into alpha-phellandrene, limonene and alpha-terpinolene. The polypeptide is Alpha pinene synthase, chloroplastic (Lavandula stoechas (Butterfly lavender)).